Consider the following 498-residue polypeptide: Probable malate:quinone oxidoreductase 2 (498 aa).

The protein belongs to the MQO family. Requires FAD as cofactor.

It catalyses the reaction (S)-malate + a quinone = a quinol + oxaloacetate. It participates in carbohydrate metabolism; tricarboxylic acid cycle; oxaloacetate from (S)-malate (quinone route): step 1/1. This Staphylococcus aureus (strain COL) protein is Probable malate:quinone oxidoreductase 2.